We begin with the raw amino-acid sequence, 633 residues long: MTSQTPQSGEIDDASAAPAQSLAGAKLIADYVRNLPPKPGVYRMFGEDGAVLYVGKARNLKNRVSNYANGRGHSNRIALMIGLTRKMEFVVTQTETEALLLEANLIKSLKPRFNILLRDDKSFPYILIRKDHPAAQLTKHRGARKAKGDYFGPFASVGAVNQTLNTLQKAFLVRTCSDSVYEGRSRACMLHQIKRCAGPCVDLIDPAAYDELVGQATDFLRGRSNALREDLQTRMAQASEAMDFETAAKLRDRIRAIAAVTTDQGINPDGVEEADVVAVHSDGGKSCVQVFFFRAGQNWGNQSFFPRHDMEAEPAEVLAAFIAQFYDDKPAPALILLSHEIEEAELLGEALSLRTERKVSLHTPRRGEKRKLVDRTLTNAREALARRMAESASQTQLLKGVQRVFDLTDLPQRIEVYDNSHIQGTNALGAMIVAGPEGFEKNHYRRFNMKGDDAATNDDFAMMKAMLKRRFSRLLKERDDGAPVPDLVLIDGGKGQLSSVMEIAEELGITDETGITIAAIAKGPERDAGREAFYLPGKPPFKLPMKDPVLYYLQRLRDEAHRFAIGGHRAKRKKQMTDNPLDGIDGIGPSRKKALLAHFGSAKAVRNAALADLEAVDGISRAMARKIHDWFQK.

Residues 37–115 (PKPGVYRMFG…IKSLKPRFNI (79 aa)) form the GIY-YIG domain. Residues 225–260 (NALREDLQTRMAQASEAMDFETAAKLRDRIRAIAAV) form the UVR domain.

This sequence belongs to the UvrC family. Interacts with UvrB in an incision complex.

The protein localises to the cytoplasm. The UvrABC repair system catalyzes the recognition and processing of DNA lesions. UvrC both incises the 5' and 3' sides of the lesion. The N-terminal half is responsible for the 3' incision and the C-terminal half is responsible for the 5' incision. This chain is UvrABC system protein C, found in Maricaulis maris (strain MCS10) (Caulobacter maris).